The following is a 435-amino-acid chain: ATP-dependent RNA helicase SUB2 (435 aa).

Residues 1 to 40 (MSHEGQEELLDYSDSEEIAVPTTTAPSAAAGEGANDKEAD) form a disordered region. Residues 7–17 (EELLDYSDSEE) are compositionally biased toward acidic residues. Residues 19-33 (AVPTTTAPSAAAGEG) are compositionally biased toward low complexity. The Q motif motif lies at 51–79 (TGFRDFLLKPELLRAIGDCGFEHPSEVQQ). The Helicase ATP-binding domain occupies 82–257 (IPQSILGTDV…KKFMQNPLEI (176 aa)). 95–102 (AKSGLGKT) contacts ATP. The short motif at 204-207 (DECD) is the DECD box element. The Helicase C-terminal domain maps to 269–430 (GLQQYYIKLD…EFPEEGVDPS (162 aa)).

The protein belongs to the DEAD box helicase family. DECD subfamily.

It is found in the nucleus. It carries out the reaction ATP + H2O = ADP + phosphate + H(+). Functionally, ATP-binding RNA helicase involved in transcription elongation and required for the export of mRNA out of the nucleus. SUB2 also plays a role in pre-mRNA splicing and spliceosome assembly. May be involved in rDNA and telomeric silencing, and maintenance of genome integrity. This chain is ATP-dependent RNA helicase SUB2 (SUB2), found in Debaryomyces hansenii (strain ATCC 36239 / CBS 767 / BCRC 21394 / JCM 1990 / NBRC 0083 / IGC 2968) (Yeast).